The sequence spans 436 residues: MALYCGDNFGVYSQPGLPPPAAAAAAAAAAPGAPPASRAPYALADYAAPPAAAANPYLWLNGPGVGVGVGVGVGGPPAAAAAAAAAYLGAPPPPPPPPGGAAGPFLQPPPAAGTFGCAQRAFAQPAPAAPASPAGPAAPGELGWLSMASREDLMKMVRPPYSYSALIAMAIQSAPERKLTLSHIYQFVADSFPFYQRSKAGWQNSIRHNLSLNDCFKKVPRDEDDPGKGNYWTLDPNCEKMFDNGNFRRKRKRRSEASSASTSTVAAGTTKSEEGLSSGLGSGVGGKPEGDSPSALLRPPQSPEPPEGTKSTASSPGGSLLSSAPCLNTFFSSLSTLSVSSSGGAQRAGPGSRHLGIQGTPLSSSGAFPASCISSEAPPDTLQLSNGASSGSGQRSSYYSPFPASTSGGQSSPFGSPFYNFSMVNSLIYPREGSEV.

Residue Ser-132 is modified to Phosphoserine. The fork-head DNA-binding region spans 158–252; the sequence is RPPYSYSALI…DNGNFRRKRK (95 aa). Residues 248-254 carry the Nuclear localization signal motif; that stretch reads RRKRKRR. Disordered stretches follow at residues 249 to 319 and 340 to 410; these read RKRK…PGGS and SSSG…SGGQ. Low complexity predominate over residues 257-277; it reads ASSASTSTVAAGTTKSEEGLS. The span at 278-287 shows a compositional bias: gly residues; that stretch reads SGLGSGVGGK. Ser-292 and Ser-302 each carry phosphoserine. A compositionally biased stretch (low complexity) spans 385-410; sequence SNGASSGSGQRSSYYSPFPASTSGGQ. The short motif at 422–430 is the 9aaTAD element; it reads SMVNSLIYP.

Phosphorylation promotes the transcription factor activity. Dephosphorylation by protein phosphatase 2A (PP2A) reduces its activity.

Its subcellular location is the nucleus. Its function is as follows. Transcription factor required for pharyngeal arch development, and which is involved in hair, ear, jaw and dental development. May act as a pioneer transcription factor during pharyngeal arch development. Required for the development of the epithelium of hair and whisker placodes and that of teeth. Required for hair follicle stem cell specification. Acts downstream of TBX1 for the formation of the thymus and parathyroid glands from the third pharyngeal pouch. In Canis lupus familiaris (Dog), this protein is Forkhead box protein I3.